Reading from the N-terminus, the 216-residue chain is Protein OPG164 (216 aa).

A topological domain (extracellular) is located at residue M1. The helical transmembrane segment at 2-22 (ILVPLITVTVVAGTILVCYIL) threads the bilayer. The Cytoplasmic portion of the chain corresponds to 23 to 216 (YICRKKIRTV…DIESSVVSLV (194 aa)). 2 positions are modified to phosphotyrosine; by host: Y112 and Y132. Short sequence motifs (NPF-motif) lie at residues 160–162 (NPF), 175–177 (NPF), and 189–191 (NPF).

The protein belongs to the orthopoxvirus OPG164 protein family. As to quaternary structure, interacts with host NCK. Interacts with protein OPG161 (via C-terminus). Interacts with protein OPG056. Interacts (via C-terminus) with host kinesin light chain/KLC1. Interacts with host intersectin-1/ITSN1 and EPS15. Phosphorylated on Tyr-112 and Tyr-132. Phosphorylations activate the host ARP2-ARP3 complex and lead to actin nucleation.

The protein resides in the host cell membrane. In terms of biological role, involved in the intracellular transport and egress of virions to the host cell surface with help of protein OPG056. Also participates in the formation of actin tails at the plasma membrane to allow efficient actin-based motility and thus cell to cell transmission of viral particles. Recruits host intersectin-1/ITSN1 and activates host CDC42 to drive ARP2/3-mediated actin polymerization. The sequence is that of Protein OPG164 (OPG164) from Variola virus (isolate Human/India/Ind3/1967) (VARV).